Reading from the N-terminus, the 287-residue chain is Elongation factor Ts (287 aa).

The interval 80 to 83 (TDFL) is involved in Mg(2+) ion dislocation from EF-Tu.

It belongs to the EF-Ts family.

The protein localises to the cytoplasm. Associates with the EF-Tu.GDP complex and induces the exchange of GDP to GTP. It remains bound to the aminoacyl-tRNA.EF-Tu.GTP complex up to the GTP hydrolysis stage on the ribosome. This Pseudomonas putida (strain W619) protein is Elongation factor Ts.